Here is a 319-residue protein sequence, read N- to C-terminus: Heavy metal-associated isoprenylated plant protein 9 (319 aa).

Basic and acidic residues-rich tracts occupy residues 1-11 and 24-45; these read MGEEVKPEAKE and EEKK…KPKE. The tract at residues 1-57 is disordered; it reads MGEEVKPEAKEAASAPQAVPAEEEEKKKDVAEEKKVAAEEEKPKEEEEPQPPPPPPP. Positions 21–48 form a coiled coil; the sequence is AEEEEKKKDVAEEKKVAAEEEKPKEEEE. 2 consecutive HMA domains span residues 55–118 and 144–208; these read PPPF…KRMA and LTTV…KQAR. C66, C69, C155, and C158 together coordinate a metal cation. The segment at 207 to 282 is disordered; sequence ARIVPQPDPE…RDNEMTAMAQ (76 aa). Basic and acidic residues predominate over residues 224 to 254; that stretch reads QEEKKEESGEGNEKPPETGEEKEEEKKKEGE. The span at 255–268 shows a compositional bias: acidic residues; that stretch reads ENGEEGGGEEAAAT. Cysteine methyl ester is present on C316. The S-farnesyl cysteine moiety is linked to residue C316. Positions 317 to 319 are cleaved as a propeptide — removed in mature form; sequence CIS.

The protein belongs to the HIPP family.

Heavy-metal-binding protein. The protein is Heavy metal-associated isoprenylated plant protein 9 of Arabidopsis thaliana (Mouse-ear cress).